Here is a 222-residue protein sequence, read N- to C-terminus: Pyridoxal phosphate homeostasis protein (222 aa).

An N6-(pyridoxal phosphate)lysine modification is found at Lys-35.

It belongs to the pyridoxal phosphate-binding protein YggS/PROSC family.

Its function is as follows. Pyridoxal 5'-phosphate (PLP)-binding protein, which is involved in PLP homeostasis. This chain is Pyridoxal phosphate homeostasis protein, found in Helicobacter pylori (strain ATCC 700392 / 26695) (Campylobacter pylori).